We begin with the raw amino-acid sequence, 222 residues long: Uridine diphosphate glucose pyrophosphatase NUDT14 (222 aa).

The Nudix hydrolase domain occupies 38-206; it reads KTHDSVTILM…DIPKTLGVIY (169 aa). The short motif at 111–129 is the Nudix box element; that stretch reads PGLSLEEAACKEAWEECGY.

The protein belongs to the Nudix hydrolase family. In terms of assembly, homodimer. Mg(2+) serves as cofactor.

It localises to the cytoplasm. The catalysed reaction is UDP-sugar + H2O = UMP + alpha-D-aldose 1-phosphate.. Hydrolyzes UDP-glucose to glucose 1-phosphate and UMP and ADP-ribose to ribose 5-phosphate and AMP. The physiological substrate is probably UDP-glucose. Poor activity on other substrates such as ADP-glucose, CDP-glucose, GDP-glucose and GDP-mannose. This Mus musculus (Mouse) protein is Uridine diphosphate glucose pyrophosphatase NUDT14 (Nudt14).